Reading from the N-terminus, the 179-residue chain is Large ribosomal subunit protein uL6 (179 aa).

This sequence belongs to the universal ribosomal protein uL6 family. Part of the 50S ribosomal subunit.

Its function is as follows. This protein binds to the 23S rRNA, and is important in its secondary structure. It is located near the subunit interface in the base of the L7/L12 stalk, and near the tRNA binding site of the peptidyltransferase center. The polypeptide is Large ribosomal subunit protein uL6 (Bacillus subtilis (strain 168)).